We begin with the raw amino-acid sequence, 511 residues long: Histidine ammonia-lyase (511 aa).

The segment at residues 142-144 (ASG) is a cross-link (5-imidazolinone (Ala-Gly)). Ser-143 carries the post-translational modification 2,3-didehydroalanine (Ser).

This sequence belongs to the PAL/histidase family. Post-translationally, contains an active site 4-methylidene-imidazol-5-one (MIO), which is formed autocatalytically by cyclization and dehydration of residues Ala-Ser-Gly.

It localises to the cytoplasm. It carries out the reaction L-histidine = trans-urocanate + NH4(+). It functions in the pathway amino-acid degradation; L-histidine degradation into L-glutamate; N-formimidoyl-L-glutamate from L-histidine: step 1/3. This Brucella canis (strain ATCC 23365 / NCTC 10854 / RM-666) protein is Histidine ammonia-lyase.